We begin with the raw amino-acid sequence, 277 residues long: Urease accessory protein UreD (277 aa).

This sequence belongs to the UreD family. UreD, UreF and UreG form a complex that acts as a GTP-hydrolysis-dependent molecular chaperone, activating the urease apoprotein by helping to assemble the nickel containing metallocenter of UreC. The UreE protein probably delivers the nickel.

The protein resides in the cytoplasm. Functionally, required for maturation of urease via the functional incorporation of the urease nickel metallocenter. The polypeptide is Urease accessory protein UreD (Rhodopseudomonas palustris (strain BisB18)).